The chain runs to 154 residues: 3-hydroxyacyl-[acyl-carrier-protein] dehydratase FabZ (154 aa).

Residue H57 is part of the active site.

The protein belongs to the thioester dehydratase family. FabZ subfamily.

It is found in the cytoplasm. It catalyses the reaction a (3R)-hydroxyacyl-[ACP] = a (2E)-enoyl-[ACP] + H2O. Its function is as follows. Involved in unsaturated fatty acids biosynthesis. Catalyzes the dehydration of short chain beta-hydroxyacyl-ACPs and long chain saturated and unsaturated beta-hydroxyacyl-ACPs. The chain is 3-hydroxyacyl-[acyl-carrier-protein] dehydratase FabZ from Allorhizobium ampelinum (strain ATCC BAA-846 / DSM 112012 / S4) (Agrobacterium vitis (strain S4)).